Here is a 796-residue protein sequence, read N- to C-terminus: Cadherin-11 (796 aa).

An N-terminal signal peptide occupies residues 1–22; that stretch reads MKENYCLQAALVCLGMLCHSHA. The propeptide occupies 23–53; sequence FAPERRGHLRPSFHGHHEKGKEGQVLQRSKR. Cadherin domains follow at residues 54 to 159, 160 to 268, 269 to 383, 384 to 486, and 487 to 612; these read GWVW…PPEF, LHET…PPKF, PQSV…PPMF, LAPS…DNAP, and KFAA…YILN. The Extracellular segment spans residues 54-617; it reads GWVWNQFFVI…AYILNAGLST (564 aa). Residues Asn-455 and Asn-540 are each glycosylated (N-linked (GlcNAc...) asparagine). Residues 618 to 640 traverse the membrane as a helical segment; the sequence is GALIAILACIVILLVIVVLFVTL. Residues 641–796 are Cytoplasmic-facing; sequence RRQKKEPLIV…GSKDTFDDDS (156 aa). A Phosphoserine modification is found at Ser-788. Thr-791 is modified (phosphothreonine).

As to quaternary structure, interacts with PCDH8. In terms of tissue distribution, expressed mainly in brain but also found in other tissues. Expressed in neuroblasts. In the embryo from 67 to 72 days of gestation, detected at high levels in facial mesenchyme including the central palatal mesenchyme, dental mesenchyme, the eye and optic muscle, and the tongue (at protein level).

The protein localises to the cell membrane. Functionally, cadherins are calcium-dependent cell adhesion proteins. They preferentially interact with themselves in a homophilic manner in connecting cells; cadherins may thus contribute to the sorting of heterogeneous cell types. Required for proper focal adhesion assembly. Involved in the regulation of cell migration. This chain is Cadherin-11 (CDH11), found in Homo sapiens (Human).